Here is a 135-residue protein sequence, read N- to C-terminus: Nitrogen fixation protein NifU 1 (135 aa).

Residues 1-10 are compositionally biased toward basic and acidic residues; sequence MRDMQDDDTK. The segment at 1 to 29 is disordered; sequence MRDMQDDDTKSPAPPPAAAAAARRAAGQA. Residues 18-29 are compositionally biased toward low complexity; it reads AAAAARRAAGQA.

It belongs to the NifU family.

Functionally, may be involved in the formation or repair of [Fe-S] clusters present in iron-sulfur proteins. The protein is Nitrogen fixation protein NifU 1 (nifU1) of Rhodobacter capsulatus (Rhodopseudomonas capsulata).